Here is a 796-residue protein sequence, read N- to C-terminus: Potassium transporter 10 (796 aa).

Residues 1-30 (MAGRVESSIGGGEIDEEGDERGSMWDLDQS) are disordered. Residues 1–58 (MAGRVESSIGGGEIDEEGDERGSMWDLDQSLDQPMDEEAGRLRNMYREKKFSAFLLLQ) are Cytoplasmic-facing. The helical transmembrane segment at 59-79 (LSFQSLGVVYGDLGTSPLYVF) threads the bilayer. Topologically, residues 80 to 95 (YNTFPRGIKDPEDIIG) are extracellular. Residues 96 to 116 (ALSLIIYSLTLIPLLKYVFVV) traverse the membrane as a helical segment. The Cytoplasmic portion of the chain corresponds to 117–184 (CKANDNGQGG…ENGTSRKNAL (68 aa)). Residues 185 to 205 (LILVLVGTCMVIGDGILTPAI) form a helical membrane-spanning segment. Over 206-217 (SVLSAAGGLRVN) the chain is Extracellular. The chain crosses the membrane as a helical span at residues 218–238 (LPHINNGIVVVVAVVILVSLF). At 239–248 (SVQHYGTDRV) the chain is on the cytoplasmic side. Residues 249–269 (GWLFAPIVFLWFLFIASIGMF) form a helical membrane-spanning segment. At 270–298 (NIWKHDPSVLKAFSPVYIFRYFKRGGQDR) the chain is on the extracellular side. Residues 299 to 319 (WTSLGGIMLSITGIEALFADL) traverse the membrane as a helical segment. Topologically, residues 320 to 321 (SH) are cytoplasmic. The chain crosses the membrane as a helical span at residues 322–342 (FPVSAVQFAFTVIVFPCLLLA). The Extracellular segment spans residues 343 to 368 (YSGQAAYLRKYPHHVEDAFYQSIPKR). Residues 369-389 (VYWPMFIIATAAAIVASQATI) traverse the membrane as a helical segment. Over 390–420 (SATFSLIKQALAHGCFPRVKVVHTSRKFLGQ) the chain is Cytoplasmic. Residues 421–441 (IYVPDINWILMILCIAVTAGF) form a helical membrane-spanning segment. At 442–453 (KNQNQIGNAYGT) the chain is on the extracellular side. Residues 454-474 (AVVIVMLVTTLLMMLIMILVW) form a helical membrane-spanning segment. Residues 475–480 (RCHWVL) lie on the Cytoplasmic side of the membrane. The chain crosses the membrane as a helical span at residues 481-501 (VLLFTLLSLVVECTYFSAVLF). The Extracellular portion of the chain corresponds to 502–505 (KVNQ). A helical membrane pass occupies residues 506 to 526 (GGWVPLVIAAAFLVIMYVWHY). Residues 527–796 (GTLKRYEFEM…LLNVGQIFYV (270 aa)) are Cytoplasmic-facing.

Belongs to the HAK/KUP transporter (TC 2.A.72.3) family.

Its subcellular location is the cell membrane. Putative potassium transporter. This is Potassium transporter 10 (POT10) from Arabidopsis thaliana (Mouse-ear cress).